Reading from the N-terminus, the 339-residue chain is tRNA(Ile)-lysidine synthase (339 aa).

An ATP-binding site is contributed by 34-39 (SGGPDS).

This sequence belongs to the tRNA(Ile)-lysidine synthase family.

It is found in the cytoplasm. It carries out the reaction cytidine(34) in tRNA(Ile2) + L-lysine + ATP = lysidine(34) in tRNA(Ile2) + AMP + diphosphate + H(+). Ligates lysine onto the cytidine present at position 34 of the AUA codon-specific tRNA(Ile) that contains the anticodon CAU, in an ATP-dependent manner. Cytidine is converted to lysidine, thus changing the amino acid specificity of the tRNA from methionine to isoleucine. The chain is tRNA(Ile)-lysidine synthase from Methylobacterium nodulans (strain LMG 21967 / CNCM I-2342 / ORS 2060).